The sequence spans 333 residues: Atrochrysone carboxyl ACP thioesterase (333 aa).

Residues His-104, His-106, Asp-108, and His-109 each contribute to the Zn(2+) site. Asp-108 functions as the Proton donor/acceptor in the catalytic mechanism.

This sequence belongs to the metallo-beta-lactamase superfamily. Zn(2+) serves as cofactor.

It carries out the reaction atrochrysone carboxyl-[ACP] + H2O = atrochrysone carboxylate + holo-[ACP] + H(+). The protein operates within pigment biosynthesis. Atrochrysone carboxyl ACP thioesterase; part of the gene cluster that mediates the biosynthesis of the bianthraquinone cladofulvin, a conidial pigment not required for virulence but that plays a role in fitness and resistance to environmental stresses including UV light and low-temperature stress. The pathway begins with the synthesis of atrochrysone thioester by the polyketide synthase (PKS) claG. The atrochrysone carboxyl ACP thioesterase claF then breaks the thioester bond and releases the atrochrysone carboxylic acid from claG. This compound is decarboxylated by claH to yield emodin, which is further converted to chrysophanol hydroquinone by the reductase claC and the dehydratase claB. The cytochrome P450 monooxygenase claM then catalyzes the dimerization of nataloe-emodin to cladofulvin. The protein is Atrochrysone carboxyl ACP thioesterase of Passalora fulva (Tomato leaf mold).